A 229-amino-acid polypeptide reads, in one-letter code: MSEEQKLPKEPPILLPGAADFTEEQIEAARVFFAQPVSFIMGAVRMDAMPPSDLPEVAFAGRSNVGKSSLINGLVNQKYLARASNEPGRTREINFFLLAEKVRLVDLPGYGFARVSRSIADKFQDLGRAYLRGRANLKRVYVLIDARHGLKKVDLEALDALDVAAVSYQIVLTKADKIKPAEVDKVVAETQKAIAKRAAAFPRVLATSSEKGLGMPELRAEIVRLCIDE.

The 176-residue stretch at 53–228 (DLPEVAFAGR…RAEIVRLCID (176 aa)) folds into the EngB-type G domain. Residues 61-68 (GRSNVGKS), 88-92 (GRTRE), 106-109 (DLPG), 173-176 (TKAD), and 207-209 (TSS) each bind GTP. The Mg(2+) site is built by Ser-68 and Thr-90.

This sequence belongs to the TRAFAC class TrmE-Era-EngA-EngB-Septin-like GTPase superfamily. EngB GTPase family. Requires Mg(2+) as cofactor.

In terms of biological role, necessary for normal cell division and for the maintenance of normal septation. This is Probable GTP-binding protein EngB from Caulobacter vibrioides (strain NA1000 / CB15N) (Caulobacter crescentus).